The primary structure comprises 172 residues: Adenine phosphoribosyltransferase (172 aa).

Belongs to the purine/pyrimidine phosphoribosyltransferase family. In terms of assembly, homodimer.

It is found in the cytoplasm. The enzyme catalyses AMP + diphosphate = 5-phospho-alpha-D-ribose 1-diphosphate + adenine. It participates in purine metabolism; AMP biosynthesis via salvage pathway; AMP from adenine: step 1/1. In terms of biological role, catalyzes a salvage reaction resulting in the formation of AMP, that is energically less costly than de novo synthesis. The polypeptide is Adenine phosphoribosyltransferase (Streptococcus pyogenes serotype M12 (strain MGAS9429)).